The sequence spans 319 residues: Pantothenate kinase (319 aa).

Residue 97-104 (GSVAVGKS) coordinates ATP.

The protein belongs to the prokaryotic pantothenate kinase family.

Its subcellular location is the cytoplasm. The enzyme catalyses (R)-pantothenate + ATP = (R)-4'-phosphopantothenate + ADP + H(+). It functions in the pathway cofactor biosynthesis; coenzyme A biosynthesis; CoA from (R)-pantothenate: step 1/5. The protein is Pantothenate kinase of Chelativorans sp. (strain BNC1).